Here is a 171-residue protein sequence, read N- to C-terminus: Co-chaperone protein HscB (171 aa).

The region spanning 2–74 is the J domain; it reads DYFTLFGLPA…LTRAEYLLSL (73 aa).

Belongs to the HscB family. As to quaternary structure, interacts with HscA and stimulates its ATPase activity. Interacts with IscU.

Functionally, co-chaperone involved in the maturation of iron-sulfur cluster-containing proteins. Seems to help targeting proteins to be folded toward HscA. The chain is Co-chaperone protein HscB from Salmonella schwarzengrund (strain CVM19633).